The chain runs to 371 residues: Probable trehalose-phosphate phosphatase 1 (371 aa).

The protein belongs to the trehalose phosphatase family. It depends on a divalent metal cation as a cofactor. In terms of tissue distribution, expressed in roots and shoots.

It carries out the reaction alpha,alpha-trehalose 6-phosphate + H2O = alpha,alpha-trehalose + phosphate. It participates in glycan biosynthesis; trehalose biosynthesis. Functionally, removes the phosphate from trehalose 6-phosphate to produce free trehalose. Trehalose accumulation in plant improves abiotic stress tolerance. This is Probable trehalose-phosphate phosphatase 1 (TPP1) from Oryza sativa subsp. japonica (Rice).